The sequence spans 370 residues: Putative agmatine deiminase (370 aa).

Cys-361 (amidino-cysteine intermediate) is an active-site residue.

Belongs to the agmatine deiminase family.

It catalyses the reaction agmatine + H2O = N-carbamoylputrescine + NH4(+). The chain is Putative agmatine deiminase from Shewanella baltica (strain OS185).